The following is a 475-amino-acid chain: Lipoprotein lipase (475 aa).

A signal peptide spans 1–27 (MESKALLLVALGMWFQSLTATRGGVAA). The interaction with GPIHBP1 stretch occupies residues 32–53 (GDFIDIESKFALRTPEDTAEDT). Residues cysteine 54 and cysteine 67 are joined by a disulfide bond. A glycan (N-linked (GlcNAc...) asparagine) is linked at asparagine 70. A 3'-nitrotyrosine modification is found at tyrosine 121. Serine 159 acts as the Nucleophile in catalysis. Aspartate 183 (charge relay system) is an active-site residue. Tyrosine 191 carries the 3'-nitrotyrosine modification. Ca(2+) contacts are provided by alanine 194, arginine 197, serine 199, and aspartate 202. A disulfide bridge links cysteine 243 with cysteine 266. Histidine 268 serves as the catalytic Charge relay system. Intrachain disulfides connect cysteine 291–cysteine 310 and cysteine 302–cysteine 305. Residues 341 to 464 (FHYQVKIHFS…KGKASVVFVK (124 aa)) enclose the PLAT domain. Tyrosine 343 bears the 3'-nitrotyrosine mark. Asparagine 386 is a glycosylation site (N-linked (GlcNAc...) asparagine). An important for interaction with lipoprotein particles region spans residues 417–421 (WSDWW). The tract at residues 430–434 (KIRVK) is important for heparin binding. Residues 443–467 (IFCSREKVSHLQKGKASVVFVKCHD) are interaction with GPIHBP1. The cysteines at positions 445 and 465 are disulfide-linked.

It belongs to the AB hydrolase superfamily. Lipase family. Homodimer. Interacts with GPIHBP1 with 1:1 stoichiometry. Interacts with APOC2; the interaction activates LPL activity in the presence of lipids. Interaction with heparan sulfate proteoglycans is required to protect LPL against loss of activity. Associates with lipoprotein particles in blood plasma. Interacts with LMF1 and SEL1L; interaction with SEL1L is required to prevent aggregation of newly synthesized LPL in the endoplasmic reticulum (ER), and for normal export of LPL from the ER to the extracellular space. Interacts with SORL1; SORL1 acts as a sorting receptor, promoting LPL localization to endosomes and later to lysosomes, leading to degradation of newly synthesized LPL. Tyrosine nitration after lipopolysaccharide (LPS) challenge down-regulates the lipase activity.

It localises to the cell membrane. It is found in the secreted. The protein localises to the extracellular space. The protein resides in the extracellular matrix. It catalyses the reaction a triacylglycerol + H2O = a diacylglycerol + a fatty acid + H(+). The apolipoprotein APOC2 acts as a coactivator of LPL activity. Ca(2+) binding promotes protein stability and formation of the active homodimer. Interaction with GPIHBP1 protects LPL against inactivation by ANGPTL4. Functionally, key enzyme in triglyceride metabolism. Catalyzes the hydrolysis of triglycerides from circulating chylomicrons and very low density lipoproteins (VLDL), and thereby plays an important role in lipid clearance from the blood stream, lipid utilization and storage. Mediates margination of triglyceride-rich lipoprotein particles in capillaries. Recruited to its site of action on the luminal surface of vascular endothelium by binding to GPIHBP1 and cell surface heparan sulfate proteoglycans. The sequence is that of Lipoprotein lipase (LPL) from Neovison vison (American mink).